The following is a 330-amino-acid chain: 3',5'-cyclic-nucleotide phosphodiesterase (330 aa).

Residues 1 to 22 form the signal peptide; it reads MFKNKLAVLFTCLSVFSFSAQS.

It belongs to the cyclic nucleotide phosphodiesterase class-II family.

The protein localises to the periplasm. The catalysed reaction is a nucleoside 3',5'-cyclic phosphate + H2O = a nucleoside 5'-phosphate + H(+). In terms of biological role, seems to allow the organism to grow on cAMP. This Aliivibrio fischeri (Vibrio fischeri) protein is 3',5'-cyclic-nucleotide phosphodiesterase (cpdP).